The sequence spans 77 residues: ATP synthase subunit c (77 aa).

2 helical membrane-spanning segments follow: residues 10-30 (IAVA…FGNM) and 57-77 (GLID…LFVL).

Belongs to the ATPase C chain family. In terms of assembly, F-type ATPases have 2 components, F(1) - the catalytic core - and F(0) - the membrane proton channel. F(1) has five subunits: alpha(3), beta(3), gamma(1), delta(1), epsilon(1). F(0) has three main subunits: a(1), b(2) and c(10-14). The alpha and beta chains form an alternating ring which encloses part of the gamma chain. F(1) is attached to F(0) by a central stalk formed by the gamma and epsilon chains, while a peripheral stalk is formed by the delta and b chains.

Its subcellular location is the cell inner membrane. Functionally, f(1)F(0) ATP synthase produces ATP from ADP in the presence of a proton or sodium gradient. F-type ATPases consist of two structural domains, F(1) containing the extramembraneous catalytic core and F(0) containing the membrane proton channel, linked together by a central stalk and a peripheral stalk. During catalysis, ATP synthesis in the catalytic domain of F(1) is coupled via a rotary mechanism of the central stalk subunits to proton translocation. Key component of the F(0) channel; it plays a direct role in translocation across the membrane. A homomeric c-ring of between 10-14 subunits forms the central stalk rotor element with the F(1) delta and epsilon subunits. The sequence is that of ATP synthase subunit c from Pseudoalteromonas translucida (strain TAC 125).